The sequence spans 472 residues: tRNA(Ile)-lysidine synthase (472 aa).

Residue 25–30 participates in ATP binding; it reads SGGPDS.

This sequence belongs to the tRNA(Ile)-lysidine synthase family.

It localises to the cytoplasm. The enzyme catalyses cytidine(34) in tRNA(Ile2) + L-lysine + ATP = lysidine(34) in tRNA(Ile2) + AMP + diphosphate + H(+). Ligates lysine onto the cytidine present at position 34 of the AUA codon-specific tRNA(Ile) that contains the anticodon CAU, in an ATP-dependent manner. Cytidine is converted to lysidine, thus changing the amino acid specificity of the tRNA from methionine to isoleucine. The protein is tRNA(Ile)-lysidine synthase (tilS) of Bacillus subtilis (strain 168).